We begin with the raw amino-acid sequence, 159 residues long: Putative 4-hydroxy-4-methyl-2-oxoglutarate aldolase (159 aa).

Substrate is bound by residues 75-78 (GDQL) and R97. D98 is a binding site for a divalent metal cation.

This sequence belongs to the class II aldolase/RraA-like family. In terms of assembly, homotrimer. A divalent metal cation serves as cofactor.

The enzyme catalyses 4-hydroxy-4-methyl-2-oxoglutarate = 2 pyruvate. It carries out the reaction oxaloacetate + H(+) = pyruvate + CO2. Its function is as follows. Catalyzes the aldol cleavage of 4-hydroxy-4-methyl-2-oxoglutarate (HMG) into 2 molecules of pyruvate. Also contains a secondary oxaloacetate (OAA) decarboxylase activity due to the common pyruvate enolate transition state formed following C-C bond cleavage in the retro-aldol and decarboxylation reactions. The polypeptide is Putative 4-hydroxy-4-methyl-2-oxoglutarate aldolase (Aromatoleum aromaticum (strain DSM 19018 / LMG 30748 / EbN1) (Azoarcus sp. (strain EbN1))).